Here is a 466-residue protein sequence, read N- to C-terminus: 3-isopropylmalate dehydratase large subunit (466 aa).

Positions 347, 407, and 410 each coordinate [4Fe-4S] cluster.

Belongs to the aconitase/IPM isomerase family. LeuC type 1 subfamily. Heterodimer of LeuC and LeuD. It depends on [4Fe-4S] cluster as a cofactor.

It catalyses the reaction (2R,3S)-3-isopropylmalate = (2S)-2-isopropylmalate. Its pathway is amino-acid biosynthesis; L-leucine biosynthesis; L-leucine from 3-methyl-2-oxobutanoate: step 2/4. Catalyzes the isomerization between 2-isopropylmalate and 3-isopropylmalate, via the formation of 2-isopropylmaleate. The polypeptide is 3-isopropylmalate dehydratase large subunit (Shigella flexneri).